Consider the following 465-residue polypeptide: ATP-sulfurylase 3, chloroplastic (465 aa).

The N-terminal 49 residues, 1–49, are a transit peptide targeting the chloroplast; sequence MASMSTVFPKPTSFISQPLTKSHKSDSVTTSISFPSNSKTRSLRTISVR.

This sequence belongs to the sulfate adenylyltransferase family. Homotetramer.

Its subcellular location is the plastid. It localises to the chloroplast stroma. The catalysed reaction is sulfate + ATP + H(+) = adenosine 5'-phosphosulfate + diphosphate. It functions in the pathway sulfur metabolism; hydrogen sulfide biosynthesis; sulfite from sulfate: step 1/3. This Arabidopsis thaliana (Mouse-ear cress) protein is ATP-sulfurylase 3, chloroplastic (APS3).